Reading from the N-terminus, the 117-residue chain is MSWRGRSTYYWPRPRRYVQPPEMIGPMRPEQFSDEVEPATPEEGEPATQCQDPAAAQEGEDEGASAGQGPKPEAHSQEQGHPQTGCECEDGPDGQEMDPPNPEEVKTPEEGEKQSQC.

Residues 1–117 (MSWRGRSTYY…PEEGEKQSQC (117 aa)) form a disordered region. 2 stretches are compositionally biased toward acidic residues: residues 32 to 45 (FSDEVEPATPEEGE) and 87 to 96 (ECEDGPDGQE). Residues 103–117 (EEVKTPEEGEKQSQC) are compositionally biased toward basic and acidic residues.

The protein belongs to the GAGE family.

The protein is G antigen 12B/C/D/E (GAGE12B) of Homo sapiens (Human).